A 116-amino-acid polypeptide reads, in one-letter code: Protein Rev (116 aa).

Serine 8 carries the post-translational modification Phosphoserine; by host CK2. Positions 18-26 are homomultimerization; the sequence is LIKSLYQSN. Disordered stretches follow at residues 20 to 46 and 84 to 116; these read KSLY…RRWR and DSSE…GAKE. The short motif at 34–50 is the Nuclear localization signal and RNA-binding (RRE) element; the sequence is TRQARRNRRRRWRERQR. The segment covering 36–46 has biased composition (basic residues); the sequence is QARRNRRRRWR. Residues 73 to 84 carry the Nuclear export signal and binding to XPO1 motif; it reads LQLPPLERLTLD. Polar residues predominate over residues 88–98; that stretch reads DCGTSGTQGVG. Residues serine 92 and serine 99 each carry the phosphoserine; by host modification.

Belongs to the HIV-1 REV protein family. As to quaternary structure, homomultimer; when bound to the RRE. Multimeric assembly is essential for activity and may involve XPO1. Binds to human KPNB1, XPO1, TNPO1, RANBP5 and IPO7. Interacts with the viral Integrase. Interacts with human KHDRBS1. Interacts with human NAP1; this interaction decreases Rev multimerization and stimulates its activity. Interacts with human DEAD-box helicases DDX3 and DDX24; these interactions may serve for viral RNA export to the cytoplasm and packaging, respectively. Interacts with human PSIP1; this interaction may inhibit HIV-1 DNA integration by promoting dissociation of the Integrase-LEDGF/p75 complex. Asymmetrically arginine dimethylated at one site by host PRMT6. Methylation impairs the RNA-binding activity and export of viral RNA from the nucleus to the cytoplasm. In terms of processing, phosphorylated by protein kinase CK2. Presence of, and maybe binding to the N-terminus of the regulatory beta subunit of CK2 is necessary for CK2-mediated Rev's phosphorylation.

It is found in the host nucleus. The protein localises to the host nucleolus. Its subcellular location is the host cytoplasm. Escorts unspliced or incompletely spliced viral pre-mRNAs (late transcripts) out of the nucleus of infected cells. These pre-mRNAs carry a recognition sequence called Rev responsive element (RRE) located in the env gene, that is not present in fully spliced viral mRNAs (early transcripts). This function is essential since most viral proteins are translated from unspliced or partially spliced pre-mRNAs which cannot exit the nucleus by the pathway used by fully processed cellular mRNAs. Rev itself is translated from a fully spliced mRNA that readily exits the nucleus. Rev's nuclear localization signal (NLS) binds directly to KPNB1/Importin beta-1 without previous binding to KPNA1/Importin alpha-1. KPNB1 binds to the GDP bound form of RAN (Ran-GDP) and targets Rev to the nucleus. In the nucleus, the conversion from Ran-GDP to Ran-GTP dissociates Rev from KPNB1 and allows Rev's binding to the RRE in viral pre-mRNAs. Rev multimerization on the RRE via cooperative assembly exposes its nuclear export signal (NES) to the surface. Rev can then form a complex with XPO1/CRM1 and Ran-GTP, leading to nuclear export of the complex. Conversion from Ran-GTP to Ran-GDP mediates dissociation of the Rev/RRE/XPO1/RAN complex, so that Rev can return to the nucleus for a subsequent round of export. Beside KPNB1, also seems to interact with TNPO1/Transportin-1, RANBP5/IPO5 and IPO7/RANBP7 for nuclear import. The nucleoporin-like HRB/RIP is an essential cofactor that probably indirectly interacts with Rev to release HIV RNAs from the perinuclear region to the cytoplasm. The sequence is that of Protein Rev from Human immunodeficiency virus type 1 group M subtype B (isolate RF/HAT3) (HIV-1).